The chain runs to 219 residues: Probable nicotinate-nucleotide adenylyltransferase (219 aa).

Belongs to the NadD family.

The catalysed reaction is nicotinate beta-D-ribonucleotide + ATP + H(+) = deamido-NAD(+) + diphosphate. The protein operates within cofactor biosynthesis; NAD(+) biosynthesis; deamido-NAD(+) from nicotinate D-ribonucleotide: step 1/1. Functionally, catalyzes the reversible adenylation of nicotinate mononucleotide (NaMN) to nicotinic acid adenine dinucleotide (NaAD). The protein is Probable nicotinate-nucleotide adenylyltransferase of Hahella chejuensis (strain KCTC 2396).